A 685-amino-acid chain; its full sequence is Tripartite terminase subunit 1 (685 aa).

Residues Cys-173–His-201 form a C3H1-type zinc finger. Disordered regions lie at residues Glu-231–Gly-254 and Leu-394–Leu-423. A compositionally biased stretch (basic and acidic residues) spans Gly-395 to Glu-407. Tyr-619–Ser-626 is a binding site for ATP.

This sequence belongs to the herpesviridae TRM1 protein family. In terms of assembly, associates with TRM2 and TRM3 to form the tripartite terminase complex. Interacts with portal protein.

The protein localises to the host nucleus. In terms of biological role, component of the molecular motor that translocates viral genomic DNA in empty capsid during DNA packaging. Forms a tripartite terminase complex together with TRM2 and TRM3 in the host cytoplasm. Once the complex reaches the host nucleus, it interacts with the capsid portal vertex. This portal forms a ring in which genomic DNA is translocated into the capsid. TRM1 carries an endonuclease activity that plays an important role for the cleavage of concatemeric viral DNA into unit length genomes. The sequence is that of Tripartite terminase subunit 1 from Epstein-Barr virus (strain B95-8) (HHV-4).